We begin with the raw amino-acid sequence, 149 residues long: MKKRVVTAGTFDILHPGHYEILKFAKSLGDELIVIVARDETVKKLKGRKPIIPEEQRREMVEALKPVDKAILGSLKNKLEPILELKPDIIVLGPDQTTFDEETLKKELAKYNLYPEIVRFRGYKKCPFHSSFDIVKEIIRRFCNKEIKI.

ATP-binding positions include 10-11 (TF), 15-18 (HPGH), aspartate 95, and tyrosine 123.

This sequence belongs to the archaeal FAD synthase family. In terms of assembly, homodimer. Co(2+) is required as a cofactor.

The catalysed reaction is FMN + ATP + H(+) = FAD + diphosphate. It participates in cofactor biosynthesis; FAD biosynthesis; FAD from FMN: step 1/1. Its activity is regulated as follows. Is inhibited by the product PPi. Catalyzes the transfer of the AMP portion of ATP to flavin mononucleotide (FMN) to produce flavin adenine dinucleotide (FAD) coenzyme. To a lesser extent, is also able to utilize other nucleotides such as CTP and GTP as substrates, producing the modified coenzymes, flavin cytosine dinucleotide (FCD) and flavin guanine dinucleotide (FGD), respectively. Does not catalyze the reverse reaction to produce FMN and ATP from FAD and PPi. Does not function as a glycerol-3-phosphate cytidylyltransferase, as previously annotated in the complete genome. This chain is FAD synthase (ribL), found in Methanocaldococcus jannaschii (strain ATCC 43067 / DSM 2661 / JAL-1 / JCM 10045 / NBRC 100440) (Methanococcus jannaschii).